The sequence spans 36 residues: Alpha-amylase inhibitor AI-3688 (36 aa).

Residues cysteine 9 and cysteine 25 are joined by a disulfide bond.

Its function is as follows. Inhibits mammalian alpha-amylases specifically but has no action on plant and microbial alpha-amylases. This is Alpha-amylase inhibitor AI-3688 from Kitasatospora aureofaciens (Streptomyces aureofaciens).